Reading from the N-terminus, the 39-residue chain is Putative beta-neurotoxin (39 aa).

Positions Gly-1 to Tyr-39 are disordered. The 37-residue stretch at Lys-3–Tyr-39 folds into the LCN-type CS-alpha/beta domain. A compositionally biased stretch (basic and acidic residues) spans Thr-28–Tyr-39.

This sequence belongs to the long (4 C-C) scorpion toxin superfamily. Sodium channel inhibitor family. Beta subfamily. Expressed by the venom gland.

It is found in the secreted. Functionally, beta toxins bind voltage-independently at site-4 of sodium channels (Nav) and shift the voltage of activation toward more negative potentials thereby affecting sodium channel activation and promoting spontaneous and repetitive firing. The polypeptide is Putative beta-neurotoxin (Tityus pachyurus (Colombian scorpion)).